Reading from the N-terminus, the 22-residue chain is Heliocin (22 aa).

Pyrrolidone carboxylic acid is present on Gln-1. Positions 1–22 (QRFIHPTYRPPPQPRRPVIMRA) are disordered. Thr-7 is a glycosylation site (O-linked (GalNAc...) threonine).

As to quaternary structure, monomer. Hemolymph.

Its subcellular location is the secreted. In terms of biological role, has antibacterial activity, preferentially against Gram-negative bacteria. This chain is Heliocin, found in Heliothis virescens (Tobacco budworm moth).